Here is a 130-residue protein sequence, read N- to C-terminus: Large ribosomal subunit protein bL12 (130 aa).

Belongs to the bacterial ribosomal protein bL12 family. Homodimer. Part of the ribosomal stalk of the 50S ribosomal subunit. Forms a multimeric L10(L12)X complex, where L10 forms an elongated spine to which 2 to 4 L12 dimers bind in a sequential fashion. Binds GTP-bound translation factors.

Forms part of the ribosomal stalk which helps the ribosome interact with GTP-bound translation factors. Is thus essential for accurate translation. This Yersinia pestis bv. Antiqua (strain Angola) protein is Large ribosomal subunit protein bL12.